A 751-amino-acid polypeptide reads, in one-letter code: Methionine--tRNA ligase, cytoplasmic (751 aa).

Position 2 is an N-acetylserine (Ser-2). The segment at Leu-36 to Tyr-92 is interaction with ARC1. The short motif at Pro-205–Asn-215 is the 'HIGH' region element. Position 411 (Lys-411) interacts with ATP. Residues Lys-525 to Ser-529 carry the 'KMSKS' region motif.

This sequence belongs to the class-I aminoacyl-tRNA synthetase family. Component of a yeast aminoacyl-tRNA synthase (aaRS) complex formed by methionyl-tRNA synthase MES1, glutamyl-tRNA synthase GUS1 and the tRNA aminoacylation cofactor ARC1 in a stoichiometric complex. Interacts (via N-ter) with ARC1 (via N-ter). Can also form a stable binary complex with ARC1 that is functional in terms of aminoacylation. ARC1 increases the affinity for cognate tRNAs due to the presence of a tRNA binding domain in the middle and C-terminal part of ARC1.

The protein resides in the cytoplasm. It carries out the reaction tRNA(Met) + L-methionine + ATP = L-methionyl-tRNA(Met) + AMP + diphosphate. Functionally, catalyzes the attachment of methionine to tRNA(Met) in a two-step reaction: methionine is first activated by ATP to form Met-AMP and then transferred to the acceptor end of tRNA(Met). This is Methionine--tRNA ligase, cytoplasmic (MES1) from Saccharomyces cerevisiae (strain ATCC 204508 / S288c) (Baker's yeast).